Consider the following 541-residue polypeptide: DEAD-box ATP-dependent RNA helicase 57 (541 aa).

A compositionally biased stretch (acidic residues) spans 43–52; the sequence is VEEEEDTEQP. The interval 43–72 is disordered; that stretch reads VEEEEDTEQPEAEKVIVSSKKRKRRSSNSV. Positions 141–169 match the Q motif motif; the sequence is ELSSRYGCEGYILRNLAELGFKEPTPIQR. Residues 172 to 342 enclose the Helicase ATP-binding domain; it reads IPILLSGREC…RSIMHDAVRV (171 aa). Position 185 to 192 (185 to 192) interacts with ATP; that stretch reads APTGSGKT. The DEAD box motif lies at 289–292; the sequence is DESD. Residues 370–514 form the Helicase C-terminal domain; it reads ALRQSFAESL…EVPSWIMSLK (145 aa). Residues 517-541 form a disordered region; that stretch reads KWRKHRPRRDSISTKPKADKNDTDE. The span at 525–541 shows a compositional bias: basic and acidic residues; it reads RDSISTKPKADKNDTDE.

This sequence belongs to the DEAD box helicase family. DDX52/ROK1 subfamily.

The enzyme catalyses ATP + H2O = ADP + phosphate + H(+). This Arabidopsis thaliana (Mouse-ear cress) protein is DEAD-box ATP-dependent RNA helicase 57 (RH57).